A 192-amino-acid polypeptide reads, in one-letter code: UPF0312 protein ECA1782 (192 aa).

The first 23 residues, 1–23 (MLKKTLLSLTAVSMLASAGSALA), serve as a signal peptide directing secretion.

Belongs to the UPF0312 family. Type 1 subfamily.

Its subcellular location is the periplasm. The protein is UPF0312 protein ECA1782 of Pectobacterium atrosepticum (strain SCRI 1043 / ATCC BAA-672) (Erwinia carotovora subsp. atroseptica).